The chain runs to 356 residues: Decorin (356 aa).

Positions 1–15 (MRLVLFILLLPVCLA) are cleaved as a signal peptide. The propeptide occupies 16 to 29 (TPFHQKGLFDFMLE). Residue Ser-45 is glycosylated (O-linked (Xyl...) (glycosaminoglycan) serine). 2 cysteine pairs are disulfide-bonded: Cys-51-Cys-57 and Cys-55-Cys-64. LRR repeat units lie at residues 70-90 (ERVP…NNKI), 91-114 (TEIR…NNKI), 115-138 (SKIS…KNNL), 139-159 (KELP…ENEI), 160-183 (SKLR…TNPL), 184-209 (KSSG…DTNI), 210-230 (TSIP…GNKI), 231-254 (SKID…FNSI), 255-278 (SSVE…NNEL), 279-301 (VRVP…NNKI), 302-331 (ASIG…SNPV), and 332-356 (QYWE…GNYK). Asn-208 carries an N-linked (GlcNAc...) asparagine glycan. N-linked (GlcNAc...) asparagine glycosylation occurs at Asn-259. Cys-310 and Cys-343 are oxidised to a cystine.

This sequence belongs to the small leucine-rich proteoglycan (SLRP) family. SLRP class I subfamily. In terms of assembly, binds to type I and type II collagen, to fibronectin and TGF-beta. Forms a ternary complex with MFAP2 and ELN. Post-translationally, the attached glycosaminoglycan chain can be either chondroitin sulfate or dermatan sulfate depending upon the tissue of origin.

It is found in the secreted. It localises to the extracellular space. The protein resides in the extracellular matrix. Its function is as follows. May affect the rate of fibrils formation. The chain is Decorin (DCN) from Coturnix japonica (Japanese quail).